The sequence spans 402 residues: Opaque-phase-specific protein OP4 (402 aa).

Positions 1–20 (MKFSQATILAIFASSALVSA) are cleaved as a signal peptide. Residues N140 and N293 are each glycosylated (N-linked (GlcNAc...) asparagine). Residues 302–322 (NNAGSSSKPTGTTTASTATAA) are disordered. Low complexity predominate over residues 304–322 (AGSSSKPTGTTTASTATAA).

This is Opaque-phase-specific protein OP4 (OPS4) from Candida albicans (strain WO-1) (Yeast).